The following is a 582-amino-acid chain: 2-succinyl-5-enolpyruvyl-6-hydroxy-3-cyclohexene-1-carboxylate synthase (582 aa).

This sequence belongs to the TPP enzyme family. MenD subfamily. In terms of assembly, homodimer. Mg(2+) is required as a cofactor. Mn(2+) serves as cofactor. It depends on thiamine diphosphate as a cofactor.

It carries out the reaction isochorismate + 2-oxoglutarate + H(+) = 5-enolpyruvoyl-6-hydroxy-2-succinyl-cyclohex-3-ene-1-carboxylate + CO2. It participates in quinol/quinone metabolism; 1,4-dihydroxy-2-naphthoate biosynthesis; 1,4-dihydroxy-2-naphthoate from chorismate: step 2/7. It functions in the pathway cofactor biosynthesis; phylloquinone biosynthesis. Catalyzes the thiamine diphosphate-dependent decarboxylation of 2-oxoglutarate and the subsequent addition of the resulting succinic semialdehyde-thiamine pyrophosphate anion to isochorismate to yield 2-succinyl-5-enolpyruvyl-6-hydroxy-3-cyclohexene-1-carboxylate (SEPHCHC). This Prochlorococcus marinus (strain MIT 9303) protein is 2-succinyl-5-enolpyruvyl-6-hydroxy-3-cyclohexene-1-carboxylate synthase.